A 256-amino-acid polypeptide reads, in one-letter code: uncharacterized protein (256 aa).

Positions 1 to 24 (MIKRVNKLVLGISLLFLVISITAG) are cleaved as a signal peptide. A lipid anchor (N-palmitoyl cysteine) is attached at Cys-25. A lipid anchor (S-diacylglycerol cysteine) is attached at Cys-25.

Belongs to the staphylococcal tandem lipoprotein family.

The protein localises to the cell membrane. This is an uncharacterized protein from Staphylococcus aureus (strain MW2).